Here is a 260-residue protein sequence, read N- to C-terminus: Transcription factor SUM-1 (260 aa).

Residues 112-163 (DKRKAATLRERRRLRKVNEAFEALKRHTCANPNQRLPKVEILRNAIEYIEKL) form the bHLH domain. Residues 171–208 (KANGDSEMDSAETSSNTSDAMTDGSSPGSYSSDKAQQY) form a disordered region. Residues 181-205 (AETSSNTSDAMTDGSSPGSYSSDKA) show a composition bias toward polar residues.

In terms of assembly, efficient DNA binding requires dimerization with another bHLH protein. Homodimer, and heterodimer with the ubiquitous bHLH protein E12.

It localises to the nucleus. Its function is as follows. Regulatory factor during embryogenesis. Conversion of pluripotent secondary mesenchyme cells to myogenic cells. It binds to the MCK enhancer element. The sequence is that of Transcription factor SUM-1 (SUM-1) from Lytechinus variegatus (Green sea urchin).